The following is a 300-amino-acid chain: MEKFTRWRDPGTGIAPFHPINTETPSGFNFKWILIVVVMILRVPLCIISVTLWFLWSCFLKPILSIQPKLSFFIDSSLSRLLLLCFGCLKLSKSTSGSFVQGDSLQPGDILAVNHSSPLDVLVLSCLYNCTFAVCDSKTSNVSIISAQAYFWSCFFSPSKLKITDAKPLAKVAAKASKIGTVVILFPEGVCTNGRALCQFTPCFDSAKETDRIFPLYIKYLPPCVTLPVPSLLSFARSVLLTVSFEIRIRFSAEPLIPRNCTDVTESAQEVLSKLGRSRVVKLGKSDKLSYLDARSKKHV.

Residues 32-52 (WILIVVVMILRVPLCIISVTL) form a helical membrane-spanning segment. The short motif at 115-120 (HSSPLD) is the HXXXXD motif element.

It belongs to the 1-acyl-sn-glycerol-3-phosphate acyltransferase family.

It localises to the lipid droplet. It is found in the endoplasmic reticulum membrane. Its subcellular location is the golgi apparatus membrane. The catalysed reaction is a 1-acyl-sn-glycero-3-phosphate + an acyl-CoA = a 1,2-diacyl-sn-glycero-3-phosphate + CoA. In terms of biological role, acyl-CoA-dependent lysophosphatidic acid acyltransferase with preference for oleoyl-CoA. Involved in triacylglyceride homeostasis and lipid droplet formation. Involved in vacuolar protein sorting. The sequence is that of Putative lysophosphatidic acid:oleoyl-CoA acyltransferase (vps66) from Schizosaccharomyces pombe (strain 972 / ATCC 24843) (Fission yeast).